Reading from the N-terminus, the 395-residue chain is ATP phosphoribosyltransferase regulatory subunit (395 aa).

Belongs to the class-II aminoacyl-tRNA synthetase family. HisZ subfamily. As to quaternary structure, heteromultimer composed of HisG and HisZ subunits.

The protein resides in the cytoplasm. It functions in the pathway amino-acid biosynthesis; L-histidine biosynthesis; L-histidine from 5-phospho-alpha-D-ribose 1-diphosphate: step 1/9. Its function is as follows. Required for the first step of histidine biosynthesis. May allow the feedback regulation of ATP phosphoribosyltransferase activity by histidine. This is ATP phosphoribosyltransferase regulatory subunit from Pseudomonas savastanoi pv. phaseolicola (strain 1448A / Race 6) (Pseudomonas syringae pv. phaseolicola (strain 1448A / Race 6)).